The primary structure comprises 345 residues: Large ribosomal subunit protein uL4 (345 aa).

N-acetylalanine is present on Ala-2.

Belongs to the universal ribosomal protein uL4 family.

The sequence is that of Large ribosomal subunit protein uL4 (rpl-4) from Caenorhabditis elegans.